The primary structure comprises 280 residues: Manganese import system permease protein ScaB (280 aa).

Transmembrane regions (helical) follow at residues 18–38, 61–81, 94–114, 139–159, 174–194, 196–216, 222–242, and 246–266; these read ALITAIAIGIVAGAVGCFIIL, ILGINFFIGAIVFGLLASILI, TAIGITFSSFLALGVILIGVA, TIGVGVTVLLVICLLFRPLLL, VKIYHYLLMVLLTLVSVTAMQ, VGTILIVAMLITPAATAYLYA, MMLLSSSLGALASILGLFIGY, and IAVGSCIVLTSAVFFLISFFI.

The protein belongs to the ABC-3 integral membrane protein family.

It localises to the cell membrane. Functionally, part of an ABC transporter complex involved in manganese import. The polypeptide is Manganese import system permease protein ScaB (Streptococcus parasanguinis).